We begin with the raw amino-acid sequence, 201 residues long: Ribonuclease HII (201 aa).

The 190-residue stretch at 12-201 (DLVAGVDEVG…VRELLDVSVQ (190 aa)) folds into the RNase H type-2 domain. A divalent metal cation contacts are provided by Asp18, Glu19, and Asp110.

It belongs to the RNase HII family. It depends on Mn(2+) as a cofactor. Requires Mg(2+) as cofactor.

The protein localises to the cytoplasm. The enzyme catalyses Endonucleolytic cleavage to 5'-phosphomonoester.. In terms of biological role, endonuclease that specifically degrades the RNA of RNA-DNA hybrids. The sequence is that of Ribonuclease HII from Pseudomonas aeruginosa (strain ATCC 15692 / DSM 22644 / CIP 104116 / JCM 14847 / LMG 12228 / 1C / PRS 101 / PAO1).